Consider the following 357-residue polypeptide: MSISAAGVATGLGANVELKSNVGSSSSSVAGVRLFTSRKAQLRRCAAPATSASLYSDANYDLNNYKFAPIKESIVAREMTRRYMTDMITHADTDVVVVGAGSAGLSCAYELSKNPNVKVAIVEQSVSPGGGAWLGGQLFSAMIVRKPAHRFLDEIEVPYEEMENYVVIKHAALFTSTIMSKLLARPNVKLFNAVAAEDLIIRGDRVSGVVTNWALVAQNHNTQSCMDPNVMEAKVVVSSCGHDGPFGATGVKRLRSIGMIESVPGMKCLDMNAAEDAIVKHTREVVPGMIVTGMEVAEIDGSPRMGPTFGAMMISGQKAAHLALKALGLPNELDGNYKPNVHPELVLASTDDETASA.

A chloroplast-targeting transit peptide spans 1–51 (MSISAAGVATGLGANVELKSNVGSSSSSVAGVRLFTSRKAQLRRCAAPATS). Substrate is bound by residues Ala103, 123-124 (EQ), Gly131, and Ala196. Position 225 is a 2,3-didehydroalanine (Cys) (Cys225). Substrate-binding positions include Asp227, His242, Met294, and 304–306 (RMG).

The protein belongs to the THI4 family. As to quaternary structure, homooctamer. Fe cation serves as cofactor. In terms of processing, during the catalytic reaction, a sulfide is transferred from Cys-225 to a reaction intermediate, generating a dehydroalanine residue.

It localises to the plastid. The protein resides in the chloroplast. It catalyses the reaction [ADP-thiazole synthase]-L-cysteine + glycine + NAD(+) = [ADP-thiazole synthase]-dehydroalanine + ADP-5-ethyl-4-methylthiazole-2-carboxylate + nicotinamide + 3 H2O + 2 H(+). Involved in biosynthesis of the thiamine precursor thiazole. Catalyzes the conversion of NAD and glycine to adenosine diphosphate 5-(2-hydroxyethyl)-4-methylthiazole-2-carboxylic acid (ADT), an adenylated thiazole intermediate. The reaction includes an iron-dependent sulfide transfer from a conserved cysteine residue of the protein to a thiazole intermediate. The enzyme can only undergo a single turnover, which suggests it is a suicide enzyme. May have additional roles in adaptation to various stress conditions and in DNA damage tolerance. This Physcomitrium patens (Spreading-leaved earth moss) protein is Thiamine thiazole synthase 1, chloroplastic.